The chain runs to 120 residues: NAD(P)H-quinone oxidoreductase subunit 3, chloroplastic (120 aa).

The next 3 membrane-spanning stretches (helical) occupy residues 9-29 (IFWA…XISG), 64-84 (MFAL…PWAM), and 88-108 (VLGV…IVGL).

Belongs to the complex I subunit 3 family. In terms of assembly, NDH is composed of at least 16 different subunits, 5 of which are encoded in the nucleus.

It localises to the plastid. The protein localises to the chloroplast thylakoid membrane. The enzyme catalyses a plastoquinone + NADH + (n+1) H(+)(in) = a plastoquinol + NAD(+) + n H(+)(out). It carries out the reaction a plastoquinone + NADPH + (n+1) H(+)(in) = a plastoquinol + NADP(+) + n H(+)(out). NDH shuttles electrons from NAD(P)H:plastoquinone, via FMN and iron-sulfur (Fe-S) centers, to quinones in the photosynthetic chain and possibly in a chloroplast respiratory chain. The immediate electron acceptor for the enzyme in this species is believed to be plastoquinone. Couples the redox reaction to proton translocation, and thus conserves the redox energy in a proton gradient. The polypeptide is NAD(P)H-quinone oxidoreductase subunit 3, chloroplastic (Eucalyptus globulus subsp. globulus (Tasmanian blue gum)).